The chain runs to 470 residues: BTB/POZ domain-containing protein 17 (470 aa).

An N-terminal signal peptide occupies residues 1 to 18 (MRMKGLYVVPLLLALVES). Positions 53 to 122 (SDTTLRIRTA…FYCGEISVNL (70 aa)) constitute a BTB domain. The BACK domain maps to 161–261 (VVSWYHYALR…ITPSQLFQIQ (101 aa)).

It is found in the secreted. This chain is BTB/POZ domain-containing protein 17 (btbd17), found in Xenopus laevis (African clawed frog).